Reading from the N-terminus, the 652-residue chain is ATP-dependent zinc metalloprotease FtsH (652 aa).

Topologically, residues 1-11 are cytoplasmic; it reads MKKQNNGLIKN. Residues 12 to 32 traverse the membrane as a helical segment; the sequence is PFLWLLFIFFLVTGFQYFYSG. Topologically, residues 33–131 are extracellular; the sequence is NNSGGSQQIN…EVTVKHESSS (99 aa). A helical membrane pass occupies residues 132–152; the sequence is GIWINLLVSIVPFGILFFFLF. Residues 153–652 lie on the Cytoplasmic side of the membrane; sequence SMMGNMGGGN…EVKSKMNDEK (500 aa). Residue 227–234 participates in ATP binding; that stretch reads GPPGTGKT. His449 serves as a coordination point for Zn(2+). The active site involves Glu450. Zn(2+)-binding residues include His453 and Asp525. Residues 628–652 form a disordered region; sequence MPEAVEEESHALSYDEVKSKMNDEK. Over residues 634 to 652 the composition is skewed to basic and acidic residues; sequence EESHALSYDEVKSKMNDEK.

It in the central section; belongs to the AAA ATPase family. This sequence in the C-terminal section; belongs to the peptidase M41 family. In terms of assembly, homohexamer. Zn(2+) serves as cofactor.

Its subcellular location is the cell membrane. Acts as a processive, ATP-dependent zinc metallopeptidase for both cytoplasmic and membrane proteins. Plays a role in the quality control of integral membrane proteins. The chain is ATP-dependent zinc metalloprotease FtsH from Streptococcus pneumoniae (strain ATCC BAA-255 / R6).